A 950-amino-acid chain; its full sequence is Protocadherin alpha-13 (950 aa).

An N-terminal signal peptide occupies residues 1-29 (MLSSWQGGPRPRQLLLWLLILAAWETGSG). Residues 30-697 (QLHYSVPEEA…GPEAALVDVN (668 aa)) lie on the Extracellular side of the membrane. 6 Cadherin domains span residues 34–133 (SVPE…PPIF), 134–242 (PESK…APEF), 243–350 (YQSV…APEV), 351–455 (TITS…APAF), 456–565 (AQPE…APAL), and 581–678 (MPRS…APQA). N-linked (GlcNAc...) asparagine glycosylation is found at Asn257 and Asn265. N-linked (GlcNAc...) asparagine glycosylation occurs at Asn548. Residues 698–718 (VYLIIAICAVSSLLVLTLLLY) form a helical membrane-spanning segment. Residues 719-950 (TALRCSAPPT…GNSTTDNSDQ (232 aa)) are Cytoplasmic-facing. PXXP repeat units follow at residues 734–737 (PGKP), 774–777 (PSLP), 799–802 (PRQP), 832–835 (PGGP), 873–876 (PGNP), and 891–894 (PGSP). Residues 734 to 894 (PGKPTLVCSS…PDKFIIPGSP (161 aa)) are 6 X 4 AA repeats of P-X-X-P. 2 disordered regions span residues 774-808 (PSLP…DWRY) and 827-950 (ILRA…NSDQ). Residues 787–800 (GQREEDSEGLKEPR) show a composition bias toward basic and acidic residues. Basic and acidic residues predominate over residues 909–923 (DKSDFITFGKKEETK).

The protein resides in the cell membrane. In terms of biological role, potential calcium-dependent cell-adhesion protein. May be involved in the establishment and maintenance of specific neuronal connections in the brain. The protein is Protocadherin alpha-13 (PCDHA13) of Pan troglodytes (Chimpanzee).